Consider the following 955-residue polypeptide: 2-oxoglutarate dehydrogenase E1 component (955 aa).

Belongs to the alpha-ketoglutarate dehydrogenase family. In terms of assembly, homodimer. Part of the 2-oxoglutarate dehydrogenase (OGDH) complex composed of E1 (2-oxoglutarate dehydrogenase), E2 (dihydrolipoamide succinyltransferase) and E3 (dihydrolipoamide dehydrogenase); the complex contains multiple copies of the three enzymatic components (E1, E2 and E3). Thiamine diphosphate is required as a cofactor.

The enzyme catalyses N(6)-[(R)-lipoyl]-L-lysyl-[protein] + 2-oxoglutarate + H(+) = N(6)-[(R)-S(8)-succinyldihydrolipoyl]-L-lysyl-[protein] + CO2. In terms of biological role, E1 component of the 2-oxoglutarate dehydrogenase (OGDH) complex which catalyzes the decarboxylation of 2-oxoglutarate, the first step in the conversion of 2-oxoglutarate to succinyl-CoA and CO(2). The sequence is that of 2-oxoglutarate dehydrogenase E1 component from Bacillus anthracis (strain A0248).